A 389-amino-acid polypeptide reads, in one-letter code: Major outer membrane porin (389 aa).

The N-terminal stretch at 1–23 (MKKLLKSALLSAAFAGSVGSLQA) is a signal peptide.

It belongs to the chlamydial porin (CP) (TC 1.B.2) family. In terms of assembly, part of a disulfide cross-linked outer membrane complex (COMC) composed of the major outer membrane porin (MOMP), the small cysteine-rich protein (OmcA) and the large cysteine-rich periplasmic protein (OmcB).

It localises to the cell outer membrane. In elementary bodies (EBs, the infectious stage, which is able to survive outside the host cell) provides the structural integrity of the outer envelope through disulfide cross-links with the small cysteine-rich protein and the large cysteine-rich periplasmic protein. It has been described in publications as the Sarkosyl-insoluble COMC (Chlamydia outer membrane complex), and serves as the functional equivalent of peptidoglycan. Functionally, permits diffusion of specific solutes through the outer membrane. This is Major outer membrane porin (ompA) from Chlamydia pneumoniae (Chlamydophila pneumoniae).